A 201-amino-acid chain; its full sequence is MSDLTNADNEREPRLITETGLDQRLADIIEPVLVDLGFRLIRVRMMNQNGATMQVMAERNDGTMTVQDCEEVSMAISPVLDVEDPVDKEYHLEVSSPGIDRPMVRKSDFVRWQGHLVKCETSILIDNRKRFRGKIVEAGTDGFTLERDQIAYGEEQKVTIPFTALSDAKLILTDDLIRDALRADKLAKAQAANQNEADDEE.

It belongs to the RimP family.

It localises to the cytoplasm. Functionally, required for maturation of 30S ribosomal subunits. This Rhizobium johnstonii (strain DSM 114642 / LMG 32736 / 3841) (Rhizobium leguminosarum bv. viciae) protein is Ribosome maturation factor RimP.